The sequence spans 112 residues: MSGKIKVTFIINDGEEKTVEAPIGLSILEIAHSNDLDLEGACEGSLACATCHVILEEEFYNKLKKPTEAEEDMLDLAFGLTDTSRLGCQIILTEELDGIKVRIPATTRNIKL.

Residues 5 to 107 form the 2Fe-2S ferredoxin-type domain; that stretch reads IKVTFIINDG…GIKVRIPATT (103 aa). Cys-42, Cys-48, Cys-51, and Cys-88 together coordinate [2Fe-2S] cluster.

The protein belongs to the adrenodoxin/putidaredoxin family. [2Fe-2S] cluster serves as cofactor.

Its function is as follows. Ferredoxin are iron-sulfur proteins that transfer electrons in a wide variety of metabolic reactions. This chain is 2Fe-2S ferredoxin (fdxB), found in Rickettsia conorii (strain ATCC VR-613 / Malish 7).